The sequence spans 205 residues: Protein Nef (205 aa).

G2 carries the N-myristoyl glycine; by host lipid modification. S6 bears the Phosphoserine; by host mark. The segment at 62–65 (EEEE) is acidic; interacts with host PACS1 and PACS2; stabilizes the interaction of NEF/MHC-I with host AP1M1; necessary for MHC-I internalization. The tract at residues 69–78 (PVTPQVPLRP) is SH3-binding; interaction with Src family tyrosine kinases. The PxxP; stabilizes the interaction of NEF/MHC-I with host AP1M1; necessary for MHC-I internalization signature appears at 72 to 75 (PQVP). The mediates dimerization, Nef-PTE1 interaction stretch occupies residues 108–124 (DILDLWIHHTQGYFPDW). Residues 148–179 (VEPEKEEANKGENTSLLHPVSLHGMDDPEREV) form a binding to ATP6V1H region. The Dileucine internalization motif; necessary for CD4 internalization signature appears at 163–164 (LL). Residues 173–174 (DD) carry the Diacidic; necessary for CD4 internalization motif.

The protein belongs to the lentivirus primate group Nef protein family. Monomer; cytosolic form. Homodimer; membrane bound form. Interacts with Nef associated p21-activated kinase (PAK2); this interaction activates PAK2. Associates with the Nef-MHC-I-AP1 complex; this complex is required for MHC-I internalization. Interacts (via C-terminus) with host PI3-kinase. Interacts with host PACS1; this interaction seems to be weak. Interacts with host PACS2. Interacts with host LCK and MAPK3; these interactions inhibit the kinase activity of the latter. Interacts with host ATP6V1H; this interaction may play a role in CD4 endocytosis. Associates with the CD4-Nef-AP2 complex; this complex is required for CD4 internalization. Interacts with host AP2 subunit alpha and AP2 subunit sigma2. Interacts with TCR-zeta chain; this interaction up-regulates the Fas ligand (FasL) surface expression. Interacts with host HCK, LYN, and SRC; these interactions activate the Src family kinases. Interacts with MAP3K5; this interaction inhibits the Fas and TNFR-mediated death signals. Interacts with beta-COP and PTE1. Interacts with human RACK1; this increases Nef phosphorylation by PKC. Interacts with TP53; this interaction decreases the half-life of TP53, protecting the infected cell against p53-mediated apoptosis. Post-translationally, the virion-associated Nef proteins are cleaved by the viral protease to release the soluble C-terminal core protein. Nef is probably cleaved concomitantly with viral structural proteins on maturation of virus particles. Myristoylated. In terms of processing, phosphorylated on serine residues, probably by host PKCdelta and theta.

The protein resides in the host cell membrane. The protein localises to the virion. Its subcellular location is the secreted. It localises to the host Golgi apparatus membrane. Its function is as follows. Factor of infectivity and pathogenicity, required for optimal virus replication. Alters numerous pathways of T-lymphocyte function and down-regulates immunity surface molecules in order to evade host defense and increase viral infectivity. Alters the functionality of other immunity cells, like dendritic cells, monocytes/macrophages and NK cells. In terms of biological role, in infected CD4(+) T-lymphocytes, down-regulates the surface MHC-I, mature MHC-II, CD4, CD28, CCR5 and CXCR4 molecules. Mediates internalization and degradation of host CD4 through the interaction of with the cytoplasmic tail of CD4, the recruitment of AP-2 (clathrin adapter protein complex 2), internalization through clathrin coated pits, and subsequent transport to endosomes and lysosomes for degradation. Diverts host MHC-I molecules to the trans-Golgi network-associated endosomal compartments by an endocytic pathway to finally target them for degradation. MHC-I down-regulation may involve AP-1 (clathrin adapter protein complex 1) or possibly Src family kinase-ZAP70/Syk-PI3K cascade recruited by PACS2. In consequence infected cells are masked for immune recognition by cytotoxic T-lymphocytes. Decreasing the number of immune receptors also prevents reinfection by more HIV particles (superinfection). Down-regulates host SERINC3 and SERINC5 thereby excluding these proteins from the viral particles. Virion infectivity is drastically higher when SERINC3 or SERINC5 are excluded from the viral envelope, because these host antiviral proteins impair the membrane fusion event necessary for subsequent virion penetration. Bypasses host T-cell signaling by inducing a transcriptional program nearly identical to that of anti-CD3 cell activation. Interaction with TCR-zeta chain up-regulates the Fas ligand (FasL). Increasing surface FasL molecules and decreasing surface MHC-I molecules on infected CD4(+) cells send attacking cytotoxic CD8+ T-lymphocytes into apoptosis. Functionally, plays a role in optimizing the host cell environment for viral replication without causing cell death by apoptosis. Protects the infected cells from apoptosis in order to keep them alive until the next virus generation is ready to strike. Inhibits the Fas and TNFR-mediated death signals by blocking MAP3K5/ASK1. Decreases the half-life of TP53, protecting the infected cell against p53-mediated apoptosis. Inhibits the apoptotic signals regulated by the Bcl-2 family proteins through the formation of a Nef/PI3-kinase/PAK2 complex that leads to activation of PAK2 and induces phosphorylation of host BAD. Its function is as follows. Extracellular Nef protein targets CD4(+) T-lymphocytes for apoptosis by interacting with CXCR4 surface receptors. The chain is Protein Nef from Homo sapiens (Human).